The chain runs to 248 residues: MSLFPSLTLLLLSVVATSYSETVTCEDSQKICPAVIACNSPGINGFPGKDGRDGTKGEKGEPGQGLRGLQGPPGKLGPPGNPGSSGSPGPKGQKGDPGESPDGDSSLAASERKALQTEMARIKKWLTFSLGRQVGNKFFLTNGEMMSFDKVKALCAKFQASVATPRNAAENRAIQNLIKEEAFLGITDENTEGEFVDLTGNKLTYTNWNNGEPNNAGSNEDCVLLLKNGKWNDIPCSSSHLALCEFPI.

The first 20 residues, 1–20 (MSLFPSLTLLLLSVVATSYS), serve as a signal peptide directing secretion. One can recognise a Collagen-like domain in the interval 42–99 (GINGFPGKDGRDGTKGEKGEPGQGLRGLQGPPGKLGPPGNPGSSGSPGPKGQKGDPGE). The interval 43–113 (INGFPGKDGR…DSSLAASERK (71 aa)) is disordered. Proline 47 bears the 4-hydroxyproline mark. A compositionally biased stretch (basic and acidic residues) spans 49-61 (KDGRDGTKGEKGE). A 4-hydroxyproline mark is found at proline 73, proline 79, proline 82, and proline 88. Residues 82–91 (PGSSGSPGPK) are compositionally biased toward low complexity. The stretch at 112 to 130 (RKALQTEMARIKKWLTFSL) forms a coiled coil. The C-type lectin domain occupies 134-245 (VGNKFFLTNG…CSSSHLALCE (112 aa)). 2 disulfide bridges follow: cysteine 155-cysteine 244 and cysteine 222-cysteine 236.

In terms of assembly, oligomeric complex of 3 or more homotrimers. Interacts with MASP1 and MASP2. Interacts with MEP1A and MEP1B and may inhibit their catalytic activity. Hydroxylation on proline residues within the sequence motif, GXPG, is most likely to be 4-hydroxy as this fits the requirement for 4-hydroxylation in vertebrates.

Its subcellular location is the secreted. Functionally, calcium-dependent lectin involved in innate immune defense. Binds mannose, fucose and N-acetylglucosamine on different microorganisms and activates the lectin complement pathway. Binds to late apoptotic cells, as well as to apoptotic blebs and to necrotic cells, but not to early apoptotic cells, facilitating their uptake by macrophages. The sequence is that of Mannose-binding protein C (MBL2) from Chlorocebus aethiops (Green monkey).